Here is a 467-residue protein sequence, read N- to C-terminus: Asparagine--tRNA ligase (467 aa).

This sequence belongs to the class-II aminoacyl-tRNA synthetase family. As to quaternary structure, homodimer.

The protein localises to the cytoplasm. The catalysed reaction is tRNA(Asn) + L-asparagine + ATP = L-asparaginyl-tRNA(Asn) + AMP + diphosphate + H(+). In Bacteroides fragilis (strain ATCC 25285 / DSM 2151 / CCUG 4856 / JCM 11019 / LMG 10263 / NCTC 9343 / Onslow / VPI 2553 / EN-2), this protein is Asparagine--tRNA ligase.